A 149-amino-acid chain; its full sequence is MEPEVVAAGIVKKRTFKKFSFRGVDLDALLDMSIEDLVKHFSSRIRRRFSRGLTRKPMALIKKLRKAKMEAPAGEKPASVRTHLRNMIIVPEMIGSIIGVYNGKTFNQVEIKPEMIGHYLAEFSISYKPVKHGRPGVGATNSSRFIPLK.

This sequence belongs to the universal ribosomal protein uS19 family.

The protein localises to the cytoplasm. This Arabidopsis thaliana (Mouse-ear cress) protein is Small ribosomal subunit protein uS19w (RPS15E).